The sequence spans 351 residues: Protein EXPRESSION OF TERPENOIDS 1 (351 aa).

A disordered region spans residues 1–23 (MANFFSLGGNQEQQHQEISSSQA). Positions 11 to 22 (QEQQHQEISSSQ) are enriched in low complexity. Residues C129, C132, C140, C145, C149, and C156 each contribute to the Zn(2+) site. A DNA-binding region (zn(2)-C6 fungal-type; degenerate) is located at residues 129 to 156 (CQDCGNQAKKDCQHMRCRTCCKSRGFQC). Positions 170-219 (RRERQQQLAALQQQQQGHNNNNNNHKNKRQREDPSASSLVSTRLPSNTNG) are disordered. Residues 175-193 (QQLAALQQQQQGHNNNNNN) are compositionally biased toward low complexity. Residues 204–219 (SASSLVSTRLPSNTNG) are compositionally biased toward polar residues. The Required for homo- and heterodimerization motif lies at 258–261 (IGGH). Positions 286 to 320 (TSSGGSAGGVQHHHHNSAAVATATTTSGGDATAAG) are disordered. The span at 303–320 (AAVATATTTSGGDATAAG) shows a compositional bias: low complexity.

Belongs to the SHI protein family. Forms homodimers and heterodimers with LRP1.

It is found in the nucleus. In terms of biological role, transcription activator involved in the transcriptional regulation of terpene biosynthesis in glandular trichomes. Binds to the promoter of the linalool synthase TPS5 and promotes TPS5 gene transactivation. Acts synergistically with MYC1 in the transactivation of TPS5. This is Protein EXPRESSION OF TERPENOIDS 1 from Solanum lycopersicum (Tomato).